We begin with the raw amino-acid sequence, 519 residues long: Matrix metalloproteinase-B (519 aa).

The N-terminal stretch at 1–26 (MTKWSPNGNPLSTIYLILSLFTLAHT) is a signal peptide. The propeptide at 27-126 (APTTQHSRTT…RQEQTKRTKR (100 aa)) is activation peptide. Residues 29-39 (TTQHSRTTTQL) are compositionally biased toward polar residues. Residues 29-50 (TTQHSRTTTQLRLEDEDGGGGV) are disordered. Residues 109–116 (PRCTQTDV) carry the Cysteine switch motif. Positions 111, 208, 210, 232, 247, and 276 each coordinate Zn(2+). Residue Glu-277 is part of the active site. His-280 and His-286 together coordinate Zn(2+). Asn-341 carries an N-linked (GlcNAc...) asparagine glycan. Residues 391–402 (KDKRSYRGDSKI) are compositionally biased toward basic and acidic residues. Residues 391 to 410 (KDKRSYRGDSKIPKCSSNNS) are disordered. N-linked (GlcNAc...) asparagine glycosylation occurs at Asn-408.

The protein belongs to the peptidase M10A family. Zn(2+) serves as cofactor. In terms of tissue distribution, expressed in spermatheca and spermathecal-uterine valve, weakly in vulva and anal muscles and in two cells in the head (probably RMEV and RMED motor neurons).

It localises to the secreted. The protein resides in the extracellular space. Its subcellular location is the extracellular matrix. With respect to regulation, inhibited by human TIMP1 and TIMP2 and the broad MMP inhibitors BB94 (Batimastat) and CT543. In terms of biological role, metalloprotease involved in molting, a process during larval stages in which a new cuticle is formed and the old cuticle is shed. Plays a role in thermotolerance probably by preventing the accumulation of oxidized lipoproteins and cholesterol. In Caenorhabditis elegans, this protein is Matrix metalloproteinase-B.